The following is a 1247-amino-acid chain: Protein jagged-2 (1247 aa).

An N-terminal signal peptide occupies residues 1–23 (MRARGWGRLPRRLLLLLVLCVQA). Topologically, residues 24 to 1082 (TRPMGYFELQ…ETVVMGGSST (1059 aa)) are extracellular. N-linked (GlcNAc...) asparagine glycosylation is present at N153. Positions 196 to 240 (VRCDENYYSATCNKFCRPRNDFFGHYTCDQYGNKACMDGWMGKEC) constitute a DSL domain. Cystine bridges form between C198/C207, C211/C223, C231/C240, C245/C256, C249/C262, C264/C273, C276/C287, C282/C293, C295/C304, C311/C323, C317/C333, C335/C344, C351/C362, C356/C371, C373/C382, C389/C400, C394/C409, C411/C420, C427/C438, C432/C447, C449/C458, C465/C475, C469/C484, C486/C495, C502/C513, C507/C522, C524/C533, C540/C551, C545/C560, C562/C571, C589/C612, C606/C622, C624/C633, C640/C651, C645/C660, C662/C671, C678/C689, C683/C698, C700/C709, C716/C727, C721/C736, and C738/C747. Residues 241-274 (KEAVCKQGCNLLHGGCTVPGECRCSYGWQGKFCD) form the EGF-like 1 domain. The region spanning 275 to 305 (ECVPYPGCVHGSCVEPWHCDCETNWGGLLCD) is the EGF-like 2; atypical domain. EGF-like domains lie at 307–345 (DLNY…KNCE) and 347–383 (AEHA…PTCA). An EGF-like 5; calcium-binding domain is found at 385–421 (DIDECASNPCAAGGTCVDQVDGFECICPEQWVGATCQ). An EGF-like 6; calcium-binding domain is found at 423-459 (DANECEGKPCLNAFSCKNLIGGYYCDCLPGWKGINCQ). Residues 461–496 (NINDCHGQCQHGGTCKDLVNGYQCVCPRGFGGRHCE) form the EGF-like 7; calcium-binding domain. 2 EGF-like domains span residues 498-534 (EYDK…LHCE) and 536-572 (DMDL…KNCS). The N-linked (GlcNAc...) asparagine glycan is linked to N570. Residues 574-634 (PRDTCPGGAC…DSGFTGTYCH (61 aa)) enclose the EGF-like 10; atypical domain. N-linked (GlcNAc...) asparagine glycosylation occurs at N619. Positions 636–672 (NIDDCMGQPCRNGGTCIDEVDSFRCFCPSGWEGELCD) constitute an EGF-like 11; calcium-binding domain. Residues 674 to 710 (NPNDCLPDPCHSRGRCYDLVNDFYCACDDGWKGKTCH) form the EGF-like 12; calcium-binding domain. EGF-like domains lie at 712-748 (REFQ…STCT) and 751-787 (KNSS…RTCT). N752 is a glycosylation site (N-linked (GlcNAc...) asparagine). 9 disulfides stabilise this stretch: C755-C766, C760-C775, C777-C786, C793-C804, C798-C813, C815-C824, C831-C842, C836-C851, and C853-C862. Positions 789 to 825 (NTNDCNPLPCYNGGICVDGVNWFRCECAPGFAGPDCR) constitute an EGF-like 15; calcium-binding domain. The EGF-like 16; calcium-binding domain occupies 827–863 (NIDECQSSPCAYGATCVDEINGYRCSCPPGRSGPRCQ). Residue N1060 is glycosylated (N-linked (GlcNAc...) asparagine). A helical transmembrane segment spans residues 1083–1103 (GLLVPVLCSVFSVLWLACVVI). Residues 1104–1247 (CVWWTRKRRK…TKDVRRAGRE (144 aa)) are Cytoplasmic-facing. Composition is skewed to basic and acidic residues over residues 1115 to 1125 (RERSRLPRDES), 1192 to 1212 (LSRG…KFTK), and 1230 to 1247 (VDNR…AGRE). 2 disordered regions span residues 1115–1148 (RERS…GSGL) and 1167–1247 (PRRA…AGRE). Phosphoserine is present on S1125.

Found to be highest in fetal thymus, epidermis, foregut dorsal root ganglia and inner ear. In 2-weeK-old mice, abundant in heart, lung, thymus, skeletal muscle, brain and testis. Expression overlaps partially with Notch1 expression.

The protein localises to the membrane. Functionally, putative Notch ligand involved in the mediation of Notch signaling. Plays an essential role during limb, craniofacial and thymic development. May be involved in myogenesis and in the development of peripheral and central nervous systems. The protein is Protein jagged-2 (Jag2) of Mus musculus (Mouse).